The following is a 209-amino-acid chain: N-acetyltransferase aca1 (209 aa).

An N-acetyltransferase domain is found at 26-202; that stretch reads TNVKNKEELL…DAYIYQYHFP (177 aa). Asparagine 118 serves as a coordination point for substrate. 128–133 contributes to the CoA binding site; it reads RSKGIG. 155 to 156 is a binding site for substrate; the sequence is NL.

Belongs to the acetyltransferase family. As to quaternary structure, homodimer.

The protein localises to the cytoplasm. Its subcellular location is the mitochondrion. The enzyme catalyses L-glutamate 5-semialdehyde + acetyl-CoA = N-acetyl-L-glutamate 5-semialdehyde + CoA + H(+). N-acetyltransferase involved in oxidative stress resistance. Acetylates the toxic proline metabolism intermediate (S)-1-pyrroline-5-carboxylate (P5C), or more likely its spontaneously forming tautomer glutamate-5-semialdehyde (GSA) into N-acetyl-GSA for arginine synthesis in the mitochondria. P5C has been shown to increase the levels of reactive oxygen species (ROS) in the cell by inhibiting the function of the respiratory chain in the mitochondria. The enzyme is able to reduce intracellular ROS levels under P5C-induced oxidative stress and protects cells from damage by oxidative stress. Also acetylates and thereby detoxifies the proline analog azetidine-2-carboxylate (AZC), however it is unlikely that AZC is a natural substrate as it occurs only in plants belonging to the Lilaceae family. The sequence is that of N-acetyltransferase aca1 from Schizosaccharomyces pombe (strain 972 / ATCC 24843) (Fission yeast).